The following is an 866-amino-acid chain: N-alpha-acetyltransferase 15, NatA auxiliary subunit (866 aa).

TPR repeat units follow at residues 46 to 79, 80 to 113, 148 to 184, and 224 to 257; these read GETL…DLKS, HVCW…DKDN, RASW…SPDK, and LAVE…NPEN. An N6-acetyllysine modification is found at lysine 262. Position 302 is a phosphoserine (serine 302). TPR repeat units lie at residues 374-407, 409-441, and 485-518; these read LWVQ…TPTL, ELFL…DTAD, and MWFQ…FIEI. Residues 500-866 are interaction with HYPK; sequence KFGEALKKCH…AEAEELANEI (367 aa). Phosphoserine occurs at positions 537 and 588. Residues 579–594 show a composition bias toward basic and acidic residues; sequence EHEADTANMSDKELKK. The segment at 579–642 is disordered; it reads EHEADTANMS…EEIGGPKEEL (64 aa). Over residues 595 to 604 the composition is skewed to basic residues; sequence LRNKQRRAQK. Positions 606–621 are enriched in basic and acidic residues; that stretch reads AQIEEEKKNAEKEKQQ. A Bipartite nuclear localization signal motif is present at residues 612–629; the sequence is KKNAEKEKQQRNQKKKKD. A TPR 8 repeat occupies 672 to 705; that stretch reads IETHLFAFEIYFRKEKFLLMLQSVKRAFAIDSSH. Residues lysine 735 and lysine 756 each carry the N6-acetyllysine modification. Serine 855 and serine 856 each carry phosphoserine.

As to quaternary structure, component of the N-terminal acetyltransferase A complex (also called the NatA complex) composed of NAA10 and NAA15. Within the complex interacts with NAA10. Component of the N-terminal acetyltransferase A (NatA)/HYPK complex at least composed of NAA10, NAA15 and HYPK, which has N-terminal acetyltransferase activity. In complex with NAA10, interacts with HYPK. Component of the N-terminal acetyltransferase E (NatE) complex at least composed of NAA10, NAA15 and NAA50. Within the complex interacts with NAA10; the interaction is required for binding to NAA50. Interacts with NAAT50. The interaction of the NatA complex with NAA50 reduces the acetylation activity of the NatA complex. Component of the N-terminal acetyltransferase E (NatE)/HYPK complex at least composed of NAA10, NAA15, NAA50 and HYPK. In complex with NAA10 interacts with HYPK; the interaction with HYPK reduces the capacity of the NatA complex to interact with NAA50. Interacts with NAA11. Interacts with XRCC6 and XRCC5. In terms of processing, cleaved by caspases during apoptosis, resulting in a stable 35 kDa fragment. Expressed at high levels in testis and in ocular endothelial cells. Also found in brain (corpus callosum), heart, colon, bone marrow and at lower levels in most adult tissues, including thyroid, liver, pancreas, mammary and salivary glands, lung, ovary, urogenital system and upper gastrointestinal tract. Overexpressed in gastric cancer, in papillary thyroid carcinomas and in a Burkitt lymphoma cell line (Daudi). Specifically suppressed in abnormal proliferating blood vessels in eyes of patients with proliferative diabetic retinopathy.

The protein localises to the cytoplasm. The protein resides in the nucleus. Functionally, auxillary subunit of N-terminal acetyltransferase complexes which display alpha (N-terminal) acetyltransferase (NAT) activity. The NAT activity may be important for vascular, hematopoietic and neuronal growth and development. Required to control retinal neovascularization in adult ocular endothelial cells. In complex with XRCC6 and XRCC5 (Ku80), up-regulates transcription from the osteocalcin promoter. The polypeptide is N-alpha-acetyltransferase 15, NatA auxiliary subunit (NAA15) (Homo sapiens (Human)).